Here is a 723-residue protein sequence, read N- to C-terminus: Catalase-peroxidase (723 aa).

The tryptophyl-tyrosyl-methioninium (Trp-Tyr) (with M-252) cross-link spans 98–226; the sequence is WHSAGSYRVG…LAAVMMGLIY (129 aa). H99 (proton acceptor) is an active-site residue. Residues 226 to 252 constitute a cross-link (tryptophyl-tyrosyl-methioninium (Tyr-Met) (with W-98)); it reads YVNPEGVDGNPDPLKTAKDMRVTFARM. A heme b-binding site is contributed by H267.

This sequence belongs to the peroxidase family. Peroxidase/catalase subfamily. In terms of assembly, homodimer or homotetramer. It depends on heme b as a cofactor. Post-translationally, formation of the three residue Trp-Tyr-Met cross-link is important for the catalase, but not the peroxidase activity of the enzyme.

The catalysed reaction is H2O2 + AH2 = A + 2 H2O. The enzyme catalyses 2 H2O2 = O2 + 2 H2O. In terms of biological role, bifunctional enzyme with both catalase and broad-spectrum peroxidase activity. The chain is Catalase-peroxidase from Vibrio vulnificus (strain CMCP6).